A 188-amino-acid polypeptide reads, in one-letter code: Josephin-2 (188 aa).

The Josephin domain maps to 11 to 188 (PPTVYHERQR…EEKGSWLRTD (178 aa)). The active-site Nucleophile is the C24. H125 acts as the Proton acceptor in catalysis.

Its subcellular location is the cytoplasm. The protein resides in the cytosol. The enzyme catalyses Thiol-dependent hydrolysis of ester, thioester, amide, peptide and isopeptide bonds formed by the C-terminal Gly of ubiquitin (a 76-residue protein attached to proteins as an intracellular targeting signal).. In terms of biological role, cleaves 'Lys-63'-linked poly-ubiquitin chains, and with lesser efficiency 'Lys-48'-linked poly-ubiquitin chains (in vitro). May act as a deubiquitinating enzyme. The chain is Josephin-2 (JOSD2) from Homo sapiens (Human).